The sequence spans 301 residues: MTTKHDVKTFQGFILTLQEYWAQQGCAIVQPLDMEVGAGTFHPMTFLRSLGPEPMSSAYVQPCRRPTDGRYGENPNRLQHYYQFQVVLKPSPSNIQELYLGSLEALGVDMNIHDVRFVEDNWESPTLGAWGLGWEVWLNGMEVSQFTYFQQVGGLECSPVTGEITYGLERLAMYIQEVDSVYDLVWTDGPMGKIMYGDVFHQNEVEQSTYNFEHANVEVLFKQFDDCEKACNELLALETPLPLPAYEQVMKASHAFNLLDARHAISVTERQRYILRVRTMAKSVAESYYQAREALGFPMCK.

It belongs to the class-II aminoacyl-tRNA synthetase family. As to quaternary structure, tetramer of two alpha and two beta subunits.

It localises to the cytoplasm. It carries out the reaction tRNA(Gly) + glycine + ATP = glycyl-tRNA(Gly) + AMP + diphosphate. This is Glycine--tRNA ligase alpha subunit from Shewanella loihica (strain ATCC BAA-1088 / PV-4).